The following is a 237-amino-acid chain: 1-(5-phosphoribosyl)-5-[(5-phosphoribosylamino)methylideneamino] imidazole-4-carboxamide isomerase (237 aa).

Catalysis depends on Asp8, which acts as the Proton acceptor. The active-site Proton donor is Asp129.

The protein belongs to the HisA/HisF family.

It localises to the cytoplasm. The enzyme catalyses 1-(5-phospho-beta-D-ribosyl)-5-[(5-phospho-beta-D-ribosylamino)methylideneamino]imidazole-4-carboxamide = 5-[(5-phospho-1-deoxy-D-ribulos-1-ylimino)methylamino]-1-(5-phospho-beta-D-ribosyl)imidazole-4-carboxamide. It participates in amino-acid biosynthesis; L-histidine biosynthesis; L-histidine from 5-phospho-alpha-D-ribose 1-diphosphate: step 4/9. This chain is 1-(5-phosphoribosyl)-5-[(5-phosphoribosylamino)methylideneamino] imidazole-4-carboxamide isomerase, found in Alkaliphilus metalliredigens (strain QYMF).